The sequence spans 333 residues: Anthranilate phosphoribosyltransferase (333 aa).

Residues Gly-80, 83–84, Thr-88, 90–93, 108–116, and Ser-120 contribute to the 5-phospho-alpha-D-ribose 1-diphosphate site; these read GD, NLST, and KHGNRSASG. Gly-80 provides a ligand contact to anthranilate. Residue Ser-92 participates in Mg(2+) binding. Position 111 (Asn-111) interacts with anthranilate. Arg-166 lines the anthranilate pocket. Mg(2+)-binding residues include Asp-224 and Glu-225.

It belongs to the anthranilate phosphoribosyltransferase family. In terms of assembly, homodimer. Requires Mg(2+) as cofactor.

The catalysed reaction is N-(5-phospho-beta-D-ribosyl)anthranilate + diphosphate = 5-phospho-alpha-D-ribose 1-diphosphate + anthranilate. It functions in the pathway amino-acid biosynthesis; L-tryptophan biosynthesis; L-tryptophan from chorismate: step 2/5. Catalyzes the transfer of the phosphoribosyl group of 5-phosphorylribose-1-pyrophosphate (PRPP) to anthranilate to yield N-(5'-phosphoribosyl)-anthranilate (PRA). This Pyrobaculum arsenaticum (strain DSM 13514 / JCM 11321 / PZ6) protein is Anthranilate phosphoribosyltransferase.